Consider the following 151-residue polypeptide: Aspartate carbamoyltransferase regulatory chain (151 aa).

Cys-108, Cys-113, Cys-136, and Cys-139 together coordinate Zn(2+).

It belongs to the PyrI family. As to quaternary structure, contains catalytic and regulatory chains. The cofactor is Zn(2+).

Its function is as follows. Involved in allosteric regulation of aspartate carbamoyltransferase. The chain is Aspartate carbamoyltransferase regulatory chain from Porphyromonas gingivalis (strain ATCC 33277 / DSM 20709 / CIP 103683 / JCM 12257 / NCTC 11834 / 2561).